The primary structure comprises 513 residues: GMP synthase [glutamine-hydrolyzing] (513 aa).

In terms of domain architecture, Glutamine amidotransferase type-1 spans 9–198 (LILVLDFGSQ…VRRVCNCTGE (190 aa)). The Nucleophile role is filled by C86. Catalysis depends on residues H172 and E174. Positions 199-388 (WTMENFIEIE…LGIPEHLVWR (190 aa)) constitute a GMPS ATP-PPase domain. 226 to 232 (SGGVDSS) contacts ATP.

Homodimer.

The enzyme catalyses XMP + L-glutamine + ATP + H2O = GMP + L-glutamate + AMP + diphosphate + 2 H(+). It participates in purine metabolism; GMP biosynthesis; GMP from XMP (L-Gln route): step 1/1. Catalyzes the synthesis of GMP from XMP. The chain is GMP synthase [glutamine-hydrolyzing] from Staphylococcus epidermidis (strain ATCC 12228 / FDA PCI 1200).